A 547-amino-acid chain; its full sequence is Flagellar hook-associated protein 1 (547 aa).

It belongs to the flagella basal body rod proteins family.

The protein resides in the secreted. It localises to the bacterial flagellum. In Escherichia coli (strain K12), this protein is Flagellar hook-associated protein 1 (flgK).